Consider the following 180-residue polypeptide: ATP-dependent protease subunit HslV (180 aa).

The active site involves Thr7. 3 residues coordinate Na(+): Gly165, Cys168, and Thr171.

It belongs to the peptidase T1B family. HslV subfamily. In terms of assembly, a double ring-shaped homohexamer of HslV is capped on each side by a ring-shaped HslU homohexamer. The assembly of the HslU/HslV complex is dependent on binding of ATP.

The protein resides in the cytoplasm. The catalysed reaction is ATP-dependent cleavage of peptide bonds with broad specificity.. Allosterically activated by HslU binding. In terms of biological role, protease subunit of a proteasome-like degradation complex believed to be a general protein degrading machinery. In Bacillus anthracis (strain A0248), this protein is ATP-dependent protease subunit HslV.